Reading from the N-terminus, the 142-residue chain is uncharacterized protein (142 aa).

The chain crosses the membrane as a helical span at residues 75–91 (YAAILAQVSFAFLCTGF).

The protein resides in the membrane. This is an uncharacterized protein from Haemophilus influenzae (strain ATCC 51907 / DSM 11121 / KW20 / Rd).